The following is a 570-amino-acid chain: Periplasmic trehalase (570 aa).

The N-terminal stretch at 1–34 (MIPPEIRRSVLLQKAIKLALAGTLLTFASFSATA) is a signal peptide. Substrate contacts are provided by residues arginine 159, 166 to 167 (WD), asparagine 203, 212 to 214 (RSQ), 284 to 286 (RPE), and glycine 317. Residues aspartate 319 and glutamate 503 each act as proton donor/acceptor in the active site. Residue glutamate 518 coordinates substrate. Residues 544–570 (KPCDSVPSTRPASLSATPTKTPSAATQ) are disordered. Positions 554–570 (PASLSATPTKTPSAATQ) are enriched in low complexity.

It belongs to the glycosyl hydrolase 37 family. In terms of assembly, monomer.

The protein resides in the periplasm. The enzyme catalyses alpha,alpha-trehalose + H2O = alpha-D-glucose + beta-D-glucose. Functionally, provides the cells with the ability to utilize trehalose at high osmolarity by splitting it into glucose molecules that can subsequently be taken up by the phosphotransferase-mediated uptake system. The sequence is that of Periplasmic trehalase from Salmonella choleraesuis (strain SC-B67).